The chain runs to 189 residues: Nucleolar protein 16 (189 aa).

Over residues Met-1–Ser-33 the composition is skewed to basic residues. The tract at residues Met-1 to Lys-34 is disordered.

Belongs to the NOP16 family.

Its subcellular location is the nucleus. It is found in the nucleolus. This chain is Nucleolar protein 16, found in Caenorhabditis elegans.